The sequence spans 256 residues: Small ribosomal subunit protein eS1A (256 aa).

Alanine 2 is modified (N-acetylalanine; partial).

It belongs to the eukaryotic ribosomal protein eS1 family. In terms of assembly, component of the small ribosomal subunit. Mature ribosomes consist of a small (40S) and a large (60S) subunit. The 40S subunit contains about 33 different proteins and 1 molecule of RNA (18S). The 60S subunit contains about 49 different proteins and 3 molecules of RNA (25S, 5.8S and 5S).

It localises to the cytoplasm. The protein is Small ribosomal subunit protein eS1A of Debaryomyces hansenii (strain ATCC 36239 / CBS 767 / BCRC 21394 / JCM 1990 / NBRC 0083 / IGC 2968) (Yeast).